A 171-amino-acid polypeptide reads, in one-letter code: 3-hydroxydecanoyl-[acyl-carrier-protein] dehydratase (171 aa).

Residue histidine 70 is part of the active site.

It belongs to the thioester dehydratase family. FabA subfamily. In terms of assembly, homodimer.

Its subcellular location is the cytoplasm. The enzyme catalyses a (3R)-hydroxyacyl-[ACP] = a (2E)-enoyl-[ACP] + H2O. The catalysed reaction is (3R)-hydroxydecanoyl-[ACP] = (2E)-decenoyl-[ACP] + H2O. It catalyses the reaction (2E)-decenoyl-[ACP] = (3Z)-decenoyl-[ACP]. The protein operates within lipid metabolism; fatty acid biosynthesis. Its function is as follows. Necessary for the introduction of cis unsaturation into fatty acids. Catalyzes the dehydration of (3R)-3-hydroxydecanoyl-ACP to E-(2)-decenoyl-ACP and then its isomerization to Z-(3)-decenoyl-ACP. Can catalyze the dehydratase reaction for beta-hydroxyacyl-ACPs with saturated chain lengths up to 16:0, being most active on intermediate chain length. The protein is 3-hydroxydecanoyl-[acyl-carrier-protein] dehydratase of Shewanella sp. (strain ANA-3).